A 130-amino-acid chain; its full sequence is Fumarate reductase subunit D (130 aa).

The next 3 membrane-spanning stretches (helical) occupy residues 35-55 (FAMI…LGVI), 67-87 (SFAT…LPMW), and 110-130 (IACY…IFMI).

This sequence belongs to the FrdD family. In terms of assembly, part of an enzyme complex containing four subunits: a flavoprotein (FrdA), an iron-sulfur protein (FrdB), and two hydrophobic anchor proteins (FrdC and FrdD).

The protein resides in the cell inner membrane. In terms of biological role, anchors the catalytic components of the fumarate reductase complex to the cell membrane, binds quinones. This is Fumarate reductase subunit D from Vibrio cholerae serotype O1 (strain M66-2).